Consider the following 463-residue polypeptide: MPLELTQSRVQKIWIPVDHRPSLPRTCGPKLTNSPTVIVMVGLPARGKTYISKKLTRYLNWIGVPTKVFNLGEYRRDGVKQYSSYNFFRPDNEEAMKVRKQCALAALRDVKSYLTKEGGQIAVFDATNTTRERRHMILHFPKENDFKVFFIESVCDDPTVVASNIMEVKISSPDYKDCNSRENAMDDFMKRINCYEASYQPLDPDNDDRDLSLIKVIDVGQRFLVNRVQDHIQRRIVYYLMNIHWQPRTIYLCRHGESKHNLQGKIGGDSGLSSRGRKFANALSKFVEEQNLKDLKVWTSQLKSTIQTAEALQLPYEQWKALNEIDAGVCEEMTYEEIKDTYPEEYALAEADKYYYRYPTGESYQDLVQRLEPVIMELERQENVLVICHQAVCVCLLAYFLDKSAEEMPYLKCPLHAVLKLTPIAYGCRVESIYLNVESVSTHRERSEDAKKGPNPLMRSNSH.

The tract at residues 1 to 246 is 6-phosphofructo-2-kinase; sequence MPLELTQSRV…VYYLMNIHWQ (246 aa). 42–50 is a binding site for ATP; it reads GLPARGKTY. Beta-D-fructose 6-phosphate is bound by residues R75 and R99. Residue D125 is part of the active site. Beta-D-fructose 6-phosphate is bound by residues T127 and R133. The active site involves C155. An ATP-binding site is contributed by 164 to 169; it reads NIMEVK. Beta-D-fructose 6-phosphate is bound by residues K169, R191, and Y195. The interval 247-463 is fructose-2,6-bisphosphatase; sequence PRTIYLCRHG…PNPLMRSNSH (217 aa). R254 contributes to the beta-D-fructose 2,6-bisphosphate binding site. H255 acts as the Tele-phosphohistidine intermediate in catalysis. 2 residues coordinate beta-D-fructose 2,6-bisphosphate: N261 and G267. E324 (proton donor/acceptor) is an active-site residue. Position 335 (Y335) interacts with beta-D-fructose 2,6-bisphosphate. 346–349 provides a ligand contact to ATP; that stretch reads YALA. 3 residues coordinate beta-D-fructose 2,6-bisphosphate: K353, Y364, and Q390. Residues 390–394 and Y426 contribute to the ATP site; that span reads QAVCV. Residues 444–463 are disordered; sequence RERSEDAKKGPNPLMRSNSH. At S462 the chain carries Phosphoserine; by AMPK and PKA.

It in the C-terminal section; belongs to the phosphoglycerate mutase family. Homodimer. Forms a heterodimer with PFKFB2. In terms of processing, phosphorylation by AMPK stimulates activity. In terms of tissue distribution, brain.

It carries out the reaction beta-D-fructose 2,6-bisphosphate + H2O = beta-D-fructose 6-phosphate + phosphate. The enzyme catalyses beta-D-fructose 6-phosphate + ATP = beta-D-fructose 2,6-bisphosphate + ADP + H(+). Catalyzes both the synthesis and degradation of fructose 2,6-bisphosphate. The chain is 6-phosphofructo-2-kinase/fructose-2,6-bisphosphatase 3 (PFKFB3) from Bos taurus (Bovine).